A 204-amino-acid chain; its full sequence is Probable peptidyl-tRNA hydrolase (204 aa).

The active-site Proton acceptor is the H36. Residues N86 and N132 each coordinate tRNA.

The protein belongs to the PTH family.

It carries out the reaction an N-acyl-L-alpha-aminoacyl-tRNA + H2O = an N-acyl-L-amino acid + a tRNA + H(+). Functionally, peptidyl-tRNA hydrolase that cleaves nascent chains-tRNAs that are not stably fixed in the P-site of 60S ribosome-nascent chain complexes. Acts downstream of the ribosome-associated quality control (RQC) pathway to release non-ubiquitinated nascent chains from 60S and 80S ribosome-nascent chain complexes. Does not act on ubiquitinated nascent chains, which are cleaved by ANKZF1 for degradation. The polypeptide is Probable peptidyl-tRNA hydrolase (Mus musculus (Mouse)).